The sequence spans 229 residues: NAD(P)H-hydrate epimerase (229 aa).

The 215-residue stretch at 10–224 folds into the YjeF N-terminal domain; the sequence is SREVDQIAIE…DIGIPPALLD (215 aa). 57–61 serves as a coordination point for (6S)-NADPHX; it reads NNGGD. The K(+) site is built by N58 and D129. Residues 133–139 and D167 contribute to the (6S)-NADPHX site; that span reads GTGIRGQ. S170 is a K(+) binding site.

It belongs to the NnrE/AIBP family. The cofactor is K(+).

It catalyses the reaction (6R)-NADHX = (6S)-NADHX. It carries out the reaction (6R)-NADPHX = (6S)-NADPHX. Its function is as follows. Catalyzes the epimerization of the S- and R-forms of NAD(P)HX, a damaged form of NAD(P)H that is a result of enzymatic or heat-dependent hydration. This is a prerequisite for the S-specific NAD(P)H-hydrate dehydratase to allow the repair of both epimers of NAD(P)HX. The protein is NAD(P)H-hydrate epimerase of Rubinisphaera brasiliensis (strain ATCC 49424 / DSM 5305 / JCM 21570 / IAM 15109 / NBRC 103401 / IFAM 1448) (Planctomyces brasiliensis).